A 246-amino-acid polypeptide reads, in one-letter code: Pyridoxine 5'-phosphate synthase (246 aa).

N12 lines the 3-amino-2-oxopropyl phosphate pocket. A 1-deoxy-D-xylulose 5-phosphate-binding site is contributed by 14-15 (DH). R23 contributes to the 3-amino-2-oxopropyl phosphate binding site. The active-site Proton acceptor is H48. 2 residues coordinate 1-deoxy-D-xylulose 5-phosphate: R50 and H55. Catalysis depends on E75, which acts as the Proton acceptor. 1-deoxy-D-xylulose 5-phosphate is bound at residue T105. H196 functions as the Proton donor in the catalytic mechanism. 3-amino-2-oxopropyl phosphate is bound by residues G197 and 218-219 (GH).

Belongs to the PNP synthase family. Homooctamer; tetramer of dimers.

The protein resides in the cytoplasm. It carries out the reaction 3-amino-2-oxopropyl phosphate + 1-deoxy-D-xylulose 5-phosphate = pyridoxine 5'-phosphate + phosphate + 2 H2O + H(+). It participates in cofactor biosynthesis; pyridoxine 5'-phosphate biosynthesis; pyridoxine 5'-phosphate from D-erythrose 4-phosphate: step 5/5. Catalyzes the complicated ring closure reaction between the two acyclic compounds 1-deoxy-D-xylulose-5-phosphate (DXP) and 3-amino-2-oxopropyl phosphate (1-amino-acetone-3-phosphate or AAP) to form pyridoxine 5'-phosphate (PNP) and inorganic phosphate. This Pseudomonas syringae pv. syringae (strain B728a) protein is Pyridoxine 5'-phosphate synthase.